Consider the following 803-residue polypeptide: Translation initiation factor IF-2 (803 aa).

Disordered stretches follow at residues 95-125 and 138-209; these read PVVE…EKAE and EVKE…KLEQ. Polar residues predominate over residues 111–121; that stretch reads VPLTSDTTNLN. Residues 138 to 155 show a composition bias toward basic and acidic residues; that stretch reads EVKEEAKKTPSEKKETPK. The span at 156–167 shows a compositional bias: basic residues; that stretch reads KGPRKETRRSRK. Residues 168-188 are compositionally biased toward basic and acidic residues; it reads PDKEDKWEREELHMTKLVEER. Positions 302 to 471 constitute a tr-type G domain; that stretch reads PRAPVVTIMG…LLQAEVLELK (170 aa). The G1 stretch occupies residues 311 to 318; that stretch reads GHVDHGKT. 311-318 contributes to the GTP binding site; it reads GHVDHGKT. A G2 region spans residues 336-340; that stretch reads GITQH. The G3 stretch occupies residues 357–360; the sequence is DTPG. GTP-binding positions include 357 to 361 and 411 to 414; these read DTPGH and NKID. Residues 411–414 are G4; it reads NKID. Residues 447–449 form a G5 region; that stretch reads SAK.

Belongs to the TRAFAC class translation factor GTPase superfamily. Classic translation factor GTPase family. IF-2 subfamily.

The protein resides in the cytoplasm. Its function is as follows. One of the essential components for the initiation of protein synthesis. Protects formylmethionyl-tRNA from spontaneous hydrolysis and promotes its binding to the 30S ribosomal subunits. Also involved in the hydrolysis of GTP during the formation of the 70S ribosomal complex. The chain is Translation initiation factor IF-2 from Coxiella burnetii (strain CbuG_Q212) (Coxiella burnetii (strain Q212)).